The following is a 121-amino-acid chain: Protein GAT4 (121 aa).

A disordered region spans residues 29 to 48 (EAQHGLPRNADSQPARPRTG). A GATA-type zinc finger spans residues 53–79 (CGQCGEIKTSLQWREGPNGAACLCNAC).

This is Protein GAT4 (GAT4) from Saccharomyces cerevisiae (strain ATCC 204508 / S288c) (Baker's yeast).